Here is a 474-residue protein sequence, read N- to C-terminus: Aspartyl/glutamyl-tRNA(Asn/Gln) amidotransferase subunit B (474 aa).

This sequence belongs to the GatB/GatE family. GatB subfamily. Heterotrimer of A, B and C subunits.

It carries out the reaction L-glutamyl-tRNA(Gln) + L-glutamine + ATP + H2O = L-glutaminyl-tRNA(Gln) + L-glutamate + ADP + phosphate + H(+). The enzyme catalyses L-aspartyl-tRNA(Asn) + L-glutamine + ATP + H2O = L-asparaginyl-tRNA(Asn) + L-glutamate + ADP + phosphate + 2 H(+). Functionally, allows the formation of correctly charged Asn-tRNA(Asn) or Gln-tRNA(Gln) through the transamidation of misacylated Asp-tRNA(Asn) or Glu-tRNA(Gln) in organisms which lack either or both of asparaginyl-tRNA or glutaminyl-tRNA synthetases. The reaction takes place in the presence of glutamine and ATP through an activated phospho-Asp-tRNA(Asn) or phospho-Glu-tRNA(Gln). This is Aspartyl/glutamyl-tRNA(Asn/Gln) amidotransferase subunit B from Wolbachia pipientis wMel.